Here is a 378-residue protein sequence, read N- to C-terminus: Probable endopolygalacturonase AFUB_016610 (378 aa).

The N-terminal stretch at 1–19 (MLKLMGSLVLLASAAEVIA) is a signal peptide. Residues 20 to 35 (SPAAEPVAPSTTLEKR) constitute a propeptide that is removed on maturation. An intrachain disulfide couples Cys38 to Cys56. PbH1 repeat units follow at residues 147–169 (TSSS…SING), 170–200 (CDGL…DIGS), and 201–222 (SSNI…AVNS). Catalysis depends on Asp215, which acts as the Proton donor. A disulfide bond links Cys217 and Cys233. Residue His237 is part of the active site. PbH1 repeat units lie at residues 252-273 (VENV…RIKA) and 281-303 (IKGV…LIEQ). An N-linked (GlcNAc...) asparagine glycan is attached at Asn254. Residue Asn327 is glycosylated (N-linked (GlcNAc...) asparagine). A disulfide bridge links Cys345 with Cys350. Asn352 carries an N-linked (GlcNAc...) asparagine glycan. Cys369 and Cys378 are oxidised to a cystine.

Belongs to the glycosyl hydrolase 28 family.

The protein resides in the secreted. The enzyme catalyses (1,4-alpha-D-galacturonosyl)n+m + H2O = (1,4-alpha-D-galacturonosyl)n + (1,4-alpha-D-galacturonosyl)m.. Functionally, involved in maceration and soft-rotting of plant tissue. Hydrolyzes the 1,4-alpha glycosidic bonds of de-esterified pectate in the smooth region of the plant cell wall. This is Probable endopolygalacturonase AFUB_016610 from Aspergillus fumigatus (strain CBS 144.89 / FGSC A1163 / CEA10) (Neosartorya fumigata).